Consider the following 92-residue polypeptide: MRVLYIIAYDITDARRLGQIRYFLKGYSTGGQKSVYECFLEREELKFIISKIKRLINPNEDRVHIFRIDGRSKVITLGIAVPPIDPEYFYIG.

D10 provides a ligand contact to Mg(2+).

This sequence belongs to the CRISPR-associated endoribonuclease Cas2 protein family. In terms of assembly, homodimer, forms a heterotetramer with a Cas1 homodimer. Mg(2+) serves as cofactor.

Functionally, CRISPR (clustered regularly interspaced short palindromic repeat), is an adaptive immune system that provides protection against mobile genetic elements (viruses, transposable elements and conjugative plasmids). CRISPR clusters contain sequences complementary to antecedent mobile elements and target invading nucleic acids. CRISPR clusters are transcribed and processed into CRISPR RNA (crRNA). Functions as a ssRNA-specific endoribonuclease. Involved in the integration of spacer DNA into the CRISPR cassette. The sequence is that of CRISPR-associated endoribonuclease Cas2 1 from Thermodesulfovibrio yellowstonii (strain ATCC 51303 / DSM 11347 / YP87).